Here is a 613-residue protein sequence, read N- to C-terminus: Dihydroxy-acid dehydratase (613 aa).

Residue Asp81 participates in Mg(2+) binding. Cys122 serves as a coordination point for [2Fe-2S] cluster. The Mg(2+) site is built by Asp123 and Lys124. Lys124 carries the N6-carboxylysine modification. A [2Fe-2S] cluster-binding site is contributed by Cys195. Glu491 contacts Mg(2+). Catalysis depends on Ser517, which acts as the Proton acceptor.

The protein belongs to the IlvD/Edd family. Homodimer. Requires [2Fe-2S] cluster as cofactor. The cofactor is Mg(2+).

It catalyses the reaction (2R)-2,3-dihydroxy-3-methylbutanoate = 3-methyl-2-oxobutanoate + H2O. The catalysed reaction is (2R,3R)-2,3-dihydroxy-3-methylpentanoate = (S)-3-methyl-2-oxopentanoate + H2O. It functions in the pathway amino-acid biosynthesis; L-isoleucine biosynthesis; L-isoleucine from 2-oxobutanoate: step 3/4. It participates in amino-acid biosynthesis; L-valine biosynthesis; L-valine from pyruvate: step 3/4. Functions in the biosynthesis of branched-chain amino acids. Catalyzes the dehydration of (2R,3R)-2,3-dihydroxy-3-methylpentanoate (2,3-dihydroxy-3-methylvalerate) into 2-oxo-3-methylpentanoate (2-oxo-3-methylvalerate) and of (2R)-2,3-dihydroxy-3-methylbutanoate (2,3-dihydroxyisovalerate) into 2-oxo-3-methylbutanoate (2-oxoisovalerate), the penultimate precursor to L-isoleucine and L-valine, respectively. The sequence is that of Dihydroxy-acid dehydratase from Aeromonas hydrophila subsp. hydrophila (strain ATCC 7966 / DSM 30187 / BCRC 13018 / CCUG 14551 / JCM 1027 / KCTC 2358 / NCIMB 9240 / NCTC 8049).